Consider the following 142-residue polypeptide: Putative 2'-deoxynucleoside 5'-phosphate N-hydrolase 1 (142 aa).

Substrate contacts are provided by residues 4 to 10 (FFSGSIR), Y19, H36, E82, and 106 to 108 (SAM).

It belongs to the 2'-deoxynucleoside 5'-phosphate N-hydrolase 1 family. In terms of assembly, monomer and homodimer.

It catalyses the reaction a pyrimidine 2'-deoxyribonucleoside 5'-phosphate + H2O = a pyrimidine nucleobase + 2-deoxy-D-ribose 5-phosphate. It carries out the reaction a purine 2'-deoxyribonucleoside 5'-phosphate + H2O = a purine nucleobase + 2-deoxy-D-ribose 5-phosphate. Its function is as follows. Catalyzes the cleavage of the N-glycosidic bond of deoxyribonucleoside 5'-monophosphates to yield deoxyribose 5-phosphate and a purine or pyrimidine base. In Syntrophotalea carbinolica (strain DSM 2380 / NBRC 103641 / GraBd1) (Pelobacter carbinolicus), this protein is Putative 2'-deoxynucleoside 5'-phosphate N-hydrolase 1.